Reading from the N-terminus, the 318-residue chain is NADH-quinone oxidoreductase subunit H 2 (318 aa).

9 helical membrane-spanning segments follow: residues leucine 4–phenylalanine 24, leucine 77–proline 97, valine 106–alanine 126, leucine 146–phenylalanine 166, leucine 179–alanine 199, leucine 214–glutamate 234, isoleucine 238–leucine 258, isoleucine 262–leucine 282, and phenylalanine 293–alanine 313.

The protein belongs to the complex I subunit 1 family. As to quaternary structure, NDH-1 is composed of 14 different subunits. Subunits NuoA, H, J, K, L, M, N constitute the membrane sector of the complex.

Its subcellular location is the cell inner membrane. The catalysed reaction is a quinone + NADH + 5 H(+)(in) = a quinol + NAD(+) + 4 H(+)(out). Its function is as follows. NDH-1 shuttles electrons from NADH, via FMN and iron-sulfur (Fe-S) centers, to quinones in the respiratory chain. The immediate electron acceptor for the enzyme in this species is believed to be ubiquinone. Couples the redox reaction to proton translocation (for every two electrons transferred, four hydrogen ions are translocated across the cytoplasmic membrane), and thus conserves the redox energy in a proton gradient. This subunit may bind ubiquinone. This chain is NADH-quinone oxidoreductase subunit H 2, found in Cereibacter sphaeroides (strain ATCC 17023 / DSM 158 / JCM 6121 / CCUG 31486 / LMG 2827 / NBRC 12203 / NCIMB 8253 / ATH 2.4.1.) (Rhodobacter sphaeroides).